Here is a 137-residue protein sequence, read N- to C-terminus: Putative pre-16S rRNA nuclease (137 aa).

Belongs to the YqgF nuclease family.

It is found in the cytoplasm. In terms of biological role, could be a nuclease involved in processing of the 5'-end of pre-16S rRNA. The protein is Putative pre-16S rRNA nuclease of Bacillus cereus (strain B4264).